Here is a 396-residue protein sequence, read N- to C-terminus: Purine ribonucleoside efflux pump NepI (396 aa).

At 1-21 (MSEFIAENRGADAITRPNWSA) the chain is on the cytoplasmic side. A helical membrane pass occupies residues 22-42 (VFSVAFCVACLIIVEFLPVSL). At 43 to 54 (LTPMAQDLGISE) the chain is on the periplasmic side. Residues 55–75 (GVAGQSVTVTAFVAMFASLFI) traverse the membrane as a helical segment. Over 76–85 (TQTIQATDRR) the chain is Cytoplasmic. A helical transmembrane segment spans residues 86–106 (NVVILFAVLLTLSCLLVSFAN). Residue Ser-107 is a topological domain, periplasmic. Residues 108–128 (FSLLLIGRACLGLALGGFWAM) traverse the membrane as a helical segment. Residues 129–147 (SASLTMRLVPPRTVPKALS) are Cytoplasmic-facing. A helical membrane pass occupies residues 148-168 (VIFGAVSIALVIAAPLGSFLG). Over 169 to 175 (ELIGWRN) the chain is Periplasmic. The helical transmembrane segment at 176 to 196 (VFNAAAVMGVLCIFWIIKSLP) threads the bilayer. Over 197 to 215 (SLPGEPSHQKQNTFRLLQR) the chain is Cytoplasmic. The chain crosses the membrane as a helical span at residues 216-236 (PGVMAGMIAIFMSFAGQFAFF). At 237-255 (TYIRPVYMNLAGFSVDGLT) the chain is on the periplasmic side. Residues 256–276 (LVLLSFGIASFIGTSLSSFIL) form a helical membrane-spanning segment. Over 277 to 281 (KRSVK) the chain is Cytoplasmic. A helical transmembrane segment spans residues 282–302 (LALAGAPLILAVSALVLTLWG). Residues 303–305 (SDK) are Periplasmic-facing. A helical membrane pass occupies residues 306–326 (IVATGVAIIWGLTFALVPVGW). The Cytoplasmic portion of the chain corresponds to 327 to 343 (STWITRSLADQAEKAGS). The chain crosses the membrane as a helical span at residues 344-364 (IQVAVIQLANTCGAAIGGYAL). Over 365–366 (DN) the chain is Periplasmic. Residues 367-387 (IGLTSPLMFSGTLMLLTALLV) traverse the membrane as a helical segment. At 388 to 396 (TAKVKMKKS) the chain is on the cytoplasmic side.

Belongs to the major facilitator superfamily. DHA1 family. NepI (TC 2.A.1.2.26) subfamily.

The protein resides in the cell inner membrane. The enzyme catalyses inosine(in) + H(+)(out) = inosine(out) + H(+)(in). It catalyses the reaction guanosine(in) + H(+)(out) = guanosine(out) + H(+)(in). In terms of biological role, involved in the efflux of purine ribonucleosides, such as inosine and guanosine. The sequence is that of Purine ribonucleoside efflux pump NepI from Shigella sonnei (strain Ss046).